The primary structure comprises 81 residues: ATP synthase subunit c, chloroplastic (81 aa).

2 helical membrane-spanning segments follow: residues 3-23 (PLIA…ASIG) and 57-77 (LAFM…LLFA).

Belongs to the ATPase C chain family. F-type ATPases have 2 components, F(1) - the catalytic core - and F(0) - the membrane proton channel. F(1) has five subunits: alpha(3), beta(3), gamma(1), delta(1), epsilon(1). F(0) has four main subunits: a(1), b(1), b'(1) and c(10-14). The alpha and beta chains form an alternating ring which encloses part of the gamma chain. F(1) is attached to F(0) by a central stalk formed by the gamma and epsilon chains, while a peripheral stalk is formed by the delta, b and b' chains.

It localises to the plastid. The protein localises to the chloroplast thylakoid membrane. Functionally, f(1)F(0) ATP synthase produces ATP from ADP in the presence of a proton or sodium gradient. F-type ATPases consist of two structural domains, F(1) containing the extramembraneous catalytic core and F(0) containing the membrane proton channel, linked together by a central stalk and a peripheral stalk. During catalysis, ATP synthesis in the catalytic domain of F(1) is coupled via a rotary mechanism of the central stalk subunits to proton translocation. In terms of biological role, key component of the F(0) channel; it plays a direct role in translocation across the membrane. A homomeric c-ring of between 10-14 subunits forms the central stalk rotor element with the F(1) delta and epsilon subunits. This Pisum sativum (Garden pea) protein is ATP synthase subunit c, chloroplastic.